Consider the following 348-residue polypeptide: Phenylalanine--tRNA ligase alpha subunit (348 aa).

Glu262 serves as a coordination point for Mg(2+).

The protein belongs to the class-II aminoacyl-tRNA synthetase family. Phe-tRNA synthetase alpha subunit type 1 subfamily. In terms of assembly, tetramer of two alpha and two beta subunits. Mg(2+) serves as cofactor.

The protein resides in the cytoplasm. It carries out the reaction tRNA(Phe) + L-phenylalanine + ATP = L-phenylalanyl-tRNA(Phe) + AMP + diphosphate + H(+). This Streptococcus pneumoniae (strain 70585) protein is Phenylalanine--tRNA ligase alpha subunit.